A 448-amino-acid chain; its full sequence is Beta-glucosidase A (448 aa).

Catalysis depends on Glu166, which acts as the Proton donor. Residue Glu355 is the Nucleophile of the active site.

This sequence belongs to the glycosyl hydrolase 1 family.

The catalysed reaction is Hydrolysis of terminal, non-reducing beta-D-glucosyl residues with release of beta-D-glucose.. It functions in the pathway glycan metabolism; cellulose degradation. The chain is Beta-glucosidase A (bglA) from Acetivibrio thermocellus (strain ATCC 27405 / DSM 1237 / JCM 9322 / NBRC 103400 / NCIMB 10682 / NRRL B-4536 / VPI 7372) (Clostridium thermocellum).